A 540-amino-acid chain; its full sequence is Arylsulfatase K (540 aa).

An N-terminal signal peptide occupies residues 1 to 22 (MLLLWVSVVAASALAAPAPGAD). The Ca(2+) site is built by D44 and C84. C84 functions as the Nucleophile in the catalytic mechanism. Residue C84 is modified to 3-oxoalanine (Cys). N112 carries an N-linked (GlcNAc...) asparagine glycan. A substrate-binding site is contributed by K132. N197 carries N-linked (GlcNAc...) asparagine glycosylation. H255 is a substrate binding site. A glycan (N-linked (GlcNAc...) asparagine) is linked at N266. Positions 317 and 318 each coordinate Ca(2+). 3 N-linked (GlcNAc...) asparagine glycosylation sites follow: N379, N417, and N502.

This sequence belongs to the sulfatase family. It depends on Ca(2+) as a cofactor. In terms of processing, the conversion to 3-oxoalanine (also known as C-formylglycine, FGly), of a serine or cysteine residue in prokaryotes and of a cysteine residue in eukaryotes, is critical for catalytic activity. The 75-kDa precursor undergoes proteolytic processing to yield a 23 kDa form. Post-translationally, N-glycosylated with both high mannose and complex type sugars.

The protein resides in the secreted. It localises to the lysosome. It carries out the reaction an aryl sulfate + H2O = a phenol + sulfate + H(+). It catalyses the reaction Hydrolysis of the 2-sulfate groups of the 2-O-sulfo-D-glucuronate residues of chondroitin sulfate, heparin and heparitin sulfate.. Functionally, catalyzes the hydrolysis of pseudosubstrates such as p-nitrocatechol sulfate and p-nitrophenyl sulfate. Catalyzes the hydrolysis of the 2-sulfate groups of the 2-O-sulfo-D-glucuronate residues of chondroitin sulfate, heparin and heparitin sulfate. Acts selectively on 2-sulfoglucuronate and lacks activity against 2-sulfoiduronate. In Bos taurus (Bovine), this protein is Arylsulfatase K (ARSK).